The chain runs to 213 residues: Large ribosomal subunit protein uL3 (213 aa).

Positions 131 to 168 (GPMSHGSKNHRLPGSTGAGTTPGRVYPGKRMAGRSGND) are disordered.

This sequence belongs to the universal ribosomal protein uL3 family. Part of the 50S ribosomal subunit. Forms a cluster with proteins L14 and L19.

One of the primary rRNA binding proteins, it binds directly near the 3'-end of the 23S rRNA, where it nucleates assembly of the 50S subunit. The polypeptide is Large ribosomal subunit protein uL3 (Synechococcus elongatus (strain ATCC 33912 / PCC 7942 / FACHB-805) (Anacystis nidulans R2)).